Consider the following 426-residue polypeptide: MNQLRLEPIEKVNGTINIPGSKSISNRALLLATLAEGTTTLTNLLDSDDIRYMLASLKQLGVNYRLTNNNTVCEVDGIAGVLNADTAQTLFLGNAGTAMRPLCAALTLGQGEFTLTGEPRMEERPIGDLVDSLRQLGADVSYLKNDGFPPLTINATGLSGGDVEIAGDLSSQFLTALLMVAPLAKGDVNIKIKGELVSKPYIDITLALMAQFGVNVTNNNYVSFEIKTGQRYISPGKLLVEGDASSASYFLAAGAIKGGEVKVTGVGKLSIQGDVKFADVLAQMGADIEWGDDYIIARGSKLNAVDLDMNHIPDAAMTIATAALFATGTTHIRNIYNWRIKETDRLAAMATELRKVGAIVDEGHDYISVTPPVKPHTANIDTYNDHRMAMCFSMLAFADCGITINEPECTSKTFPDYFTQFNALAN.

3 residues coordinate 3-phosphoshikimate: Lys-22, Ser-23, and Arg-27. A phosphoenolpyruvate-binding site is contributed by Lys-22. Residues Gly-96 and Arg-124 each coordinate phosphoenolpyruvate. 3-phosphoshikimate is bound by residues Ser-170, Ser-171, Gln-172, Ser-198, Asp-314, Asn-337, and Lys-341. Gln-172 contacts phosphoenolpyruvate. The active-site Proton acceptor is the Asp-314. Phosphoenolpyruvate is bound by residues Arg-345, Arg-387, and Lys-412.

It belongs to the EPSP synthase family. Monomer.

The protein resides in the cytoplasm. It carries out the reaction 3-phosphoshikimate + phosphoenolpyruvate = 5-O-(1-carboxyvinyl)-3-phosphoshikimate + phosphate. The protein operates within metabolic intermediate biosynthesis; chorismate biosynthesis; chorismate from D-erythrose 4-phosphate and phosphoenolpyruvate: step 6/7. In terms of biological role, catalyzes the transfer of the enolpyruvyl moiety of phosphoenolpyruvate (PEP) to the 5-hydroxyl of shikimate-3-phosphate (S3P) to produce enolpyruvyl shikimate-3-phosphate and inorganic phosphate. This is 3-phosphoshikimate 1-carboxyvinyltransferase from Shewanella piezotolerans (strain WP3 / JCM 13877).